The chain runs to 297 residues: UDP-N-acetylenolpyruvoylglucosamine reductase (297 aa).

Residues 24 to 189 enclose the FAD-binding PCMH-type domain; the sequence is KVGGNAEIFF…LKAIFKVNKG (166 aa). R169 is a catalytic residue. The active-site Proton donor is S218. E289 is an active-site residue.

This sequence belongs to the MurB family. Requires FAD as cofactor.

The protein resides in the cytoplasm. It carries out the reaction UDP-N-acetyl-alpha-D-muramate + NADP(+) = UDP-N-acetyl-3-O-(1-carboxyvinyl)-alpha-D-glucosamine + NADPH + H(+). It functions in the pathway cell wall biogenesis; peptidoglycan biosynthesis. Its function is as follows. Cell wall formation. This chain is UDP-N-acetylenolpyruvoylglucosamine reductase, found in Rickettsia canadensis (strain McKiel).